Reading from the N-terminus, the 284-residue chain is UPF0761 membrane protein IL2447 (284 aa).

Transmembrane regions (helical) follow at residues 41–61 (MLSLVPLLVVMFTVFSAFPMF), 98–118 (MTAIGVGFLFIVAIMLMSAID), 137–157 (FAVYWMLLTLGPVLIGSGLAA), 178–198 (FVLWFVPIVTSFVFFVLMYQL), 214–234 (VIAALLFELSKQLFSLYITFF), and 247–267 (IPILIVWIYLSWLIVLIGAVL).

The protein belongs to the UPF0761 family.

The protein localises to the cell inner membrane. The polypeptide is UPF0761 membrane protein IL2447 (Idiomarina loihiensis (strain ATCC BAA-735 / DSM 15497 / L2-TR)).